A 323-amino-acid polypeptide reads, in one-letter code: Prenyl transferase (323 aa).

Residues Lys46, Arg49, and His81 each coordinate isopentenyl diphosphate. Residues Asp88 and Asp92 each coordinate Mg(2+). Residue Arg97 coordinates an all-trans-polyprenyl diphosphate. Residue Arg98 coordinates isopentenyl diphosphate. Residues Lys174, Thr175, and Gln212 each coordinate an all-trans-polyprenyl diphosphate.

Belongs to the FPP/GGPP synthase family. Mg(2+) serves as cofactor.

Possible role in synthesis of the nonaprenyl side chain of plastoquinone or in synthesis of other prenyl chains such as undekaprenyl pyrophosphate. This is Prenyl transferase (preA) from Synechocystis sp. (strain ATCC 27184 / PCC 6803 / Kazusa).